A 531-amino-acid chain; its full sequence is Zinc finger C2HC domain-containing protein 1C (531 aa).

The segment at 16 to 45 (MLPHNTTEAPGPHSAKQDSYEQSDSSQQSL) is disordered. Low complexity predominate over residues 35–44 (YEQSDSSQQS). Residues 209–264 (VQIRRLEAAGESLEEEIRRKQILLRGKLKKTEEELRRIQTQKEQAKENENRELQKI) adopt a coiled-coil conformation. 2 disordered regions span residues 290-318 (FEEE…QLSD) and 334-387 (NKIR…PQLG). Basic and acidic residues predominate over residues 293–305 (EFSRDKREDETWE). A compositionally biased stretch (polar residues) spans 306 to 315 (RSQQNSSPFQ). Positions 335-345 (KIRDRVSEPSM) are enriched in basic and acidic residues. The segment covering 366–380 (SSLSMAPDSSGSSGS) has biased composition (low complexity). 2 consecutive C2HC/C3H-type zinc fingers follow at residues 385-414 (QLGE…MQGS) and 493-522 (DYIQ…IKNR). 8 residues coordinate Zn(2+): Cys389, Cys392, His404, Cys408, Cys497, Cys500, His512, and Cys516.

The protein belongs to the ZC2HC1 family. Zn(2+) is required as a cofactor.

The polypeptide is Zinc finger C2HC domain-containing protein 1C (ZC2HC1C) (Macaca fascicularis (Crab-eating macaque)).